We begin with the raw amino-acid sequence, 52 residues long: uncharacterized protein (52 aa).

The next 2 membrane-spanning stretches (helical) occupy residues 4–24 (IIIPAILAIFALWILLQISLE) and 25–45 (MSIVKNPMNYFIVFIIFFLFV).

Its subcellular location is the cell membrane. This is an uncharacterized protein from Bacillus subtilis (strain 168).